The chain runs to 551 residues: Small ribosomal subunit protein bS1 (551 aa).

S1 motif domains are found at residues 21–83 (GALV…LSRE), 101–167 (GEMV…VSRR), 188–256 (GQEI…LGMK), 273–343 (NSRV…LGIK), 360–430 (DEKI…LGIK), and 447–516 (DAVI…VSHK).

Belongs to the bacterial ribosomal protein bS1 family.

Binds mRNA; thus facilitating recognition of the initiation point. It is needed to translate mRNA with a short Shine-Dalgarno (SD) purine-rich sequence. The protein is Small ribosomal subunit protein bS1 (rpsA) of Coxiella burnetii (strain RSA 493 / Nine Mile phase I).